The primary structure comprises 134 residues: Profilin-2 (134 aa).

Residues Cys-13 and Cys-118 are joined by a disulfide bond. The Involved in PIP2 interaction signature appears at 84-100 (AVIRGKKGAGGITIKKT). Phosphothreonine is present on Thr-114.

It belongs to the profilin family. Occurs in many kinds of cells as a complex with monomeric actin in a 1:1 ratio. Phosphorylated by MAP kinases.

It localises to the cytoplasm. The protein localises to the cytoskeleton. In terms of biological role, binds to actin and affects the structure of the cytoskeleton. At high concentrations, profilin prevents the polymerization of actin, whereas it enhances it at low concentrations. This is Profilin-2 from Olea europaea (Common olive).